We begin with the raw amino-acid sequence, 198 residues long: Pyridoxal 5'-phosphate synthase subunit PdxT (198 aa).

Residue 49–51 (GES) participates in L-glutamine binding. Residue C81 is the Nucleophile of the active site. L-glutamine-binding positions include R113 and 141–142 (IR). Residues H177 and E179 each act as charge relay system in the active site.

This sequence belongs to the glutaminase PdxT/SNO family. In the presence of PdxS, forms a dodecamer of heterodimers. Only shows activity in the heterodimer.

The catalysed reaction is aldehydo-D-ribose 5-phosphate + D-glyceraldehyde 3-phosphate + L-glutamine = pyridoxal 5'-phosphate + L-glutamate + phosphate + 3 H2O + H(+). It catalyses the reaction L-glutamine + H2O = L-glutamate + NH4(+). It functions in the pathway cofactor biosynthesis; pyridoxal 5'-phosphate biosynthesis. Its function is as follows. Catalyzes the hydrolysis of glutamine to glutamate and ammonia as part of the biosynthesis of pyridoxal 5'-phosphate. The resulting ammonia molecule is channeled to the active site of PdxS. This chain is Pyridoxal 5'-phosphate synthase subunit PdxT, found in Mycobacterium ulcerans (strain Agy99).